Reading from the N-terminus, the 600-residue chain is UvrABC system protein C (600 aa).

The GIY-YIG domain occupies aspartate 15 to valine 92. Residues serine 197–threonine 232 form the UVR domain.

It belongs to the UvrC family. Interacts with UvrB in an incision complex.

It is found in the cytoplasm. Its function is as follows. The UvrABC repair system catalyzes the recognition and processing of DNA lesions. UvrC both incises the 5' and 3' sides of the lesion. The N-terminal half is responsible for the 3' incision and the C-terminal half is responsible for the 5' incision. The polypeptide is UvrABC system protein C (Lactobacillus gasseri (strain ATCC 33323 / DSM 20243 / BCRC 14619 / CIP 102991 / JCM 1131 / KCTC 3163 / NCIMB 11718 / NCTC 13722 / AM63)).